Here is a 744-residue protein sequence, read N- to C-terminus: Protein pthb1 homolog (744 aa).

Residues 722 to 733 (EHSPKELPKIRE) are compositionally biased toward basic and acidic residues. Positions 722 to 744 (EHSPKELPKIREEEEEEEQQVTA) are disordered. The segment covering 734–744 (EEEEEEQQVTA) has biased composition (acidic residues).

As to quaternary structure, part of BBSome complex, that contains bbs-1, bbs-2, bbs-4, bbs-5, osm-12, bbs-8/ttc-8 and bbs-9. Interacts with bbs-1.

Its function is as follows. Component of the BBSome complex. The BBSome complex is thought to function as a coat complex required for sorting of specific membrane proteins to the primary cilia. The BBSome complex is required for ciliogenesis but is dispensable for centriolar satellite function. Required for proper BBSome complex assembly and its ciliary localization. Required for cilia biogenesis and both the assembly and movement of intraflagellar transport proteins along the ciliary axoneme. In ciliated sensory neurons, required for the sensation of nitric oxide and avoidance of NO-producing organisms like P.aeruginosa. The sequence is that of Protein pthb1 homolog from Caenorhabditis elegans.